The primary structure comprises 408 residues: Serine/threonine transporter SstT (408 aa).

Helical transmembrane passes span 11–31 (LANG…VALA), 43–63 (FLGS…VFIL), 82–102 (IVVL…ILSM), 141–161 (ALMT…GLAL), 192–212 (IGIF…AIAG), 216–236 (LLAV…PLIV), 290–310 (IPLG…VLTL), 316–336 (LGIQ…AISA), and 363–383 (VAMQ…AAET).

It belongs to the dicarboxylate/amino acid:cation symporter (DAACS) (TC 2.A.23) family.

It localises to the cell inner membrane. It catalyses the reaction L-serine(in) + Na(+)(in) = L-serine(out) + Na(+)(out). The catalysed reaction is L-threonine(in) + Na(+)(in) = L-threonine(out) + Na(+)(out). In terms of biological role, involved in the import of serine and threonine into the cell, with the concomitant import of sodium (symport system). The chain is Serine/threonine transporter SstT from Shewanella oneidensis (strain ATCC 700550 / JCM 31522 / CIP 106686 / LMG 19005 / NCIMB 14063 / MR-1).